Reading from the N-terminus, the 79-residue chain is Neurotoxin 3FTx-LI (79 aa).

The signal sequence occupies residues 1–21; sequence MKTLLLTLVVVTIVCLDLGYT. 4 cysteine pairs are disulfide-bonded: Cys-24–Cys-43, Cys-36–Cys-61, Cys-65–Cys-71, and Cys-72–Cys-77.

In terms of tissue distribution, expressed by the venom gland.

It localises to the secreted. In terms of biological role, blocks both the muscle-twitch response to nerve stimulation and the response to exogenous acetylcholine. This is Neurotoxin 3FTx-LI from Bungarus fasciatus (Banded krait).